A 461-amino-acid chain; its full sequence is Cyclic 2,3-diphosphoglycerate synthetase (461 aa).

It belongs to the cyclic 2,3-diphosphoglycerate synthetase family.

The protein localises to the cytoplasm. The catalysed reaction is (2R)-2,3-bisphosphoglycerate + ATP + H(+) = cyclic (2R)-2,3-bisphosphoglycerate + ADP + phosphate. Its function is as follows. Catalyzes the formation of cyclic 2,3-diphosphoglycerate (cDPG) by formation of an intramolecular phosphoanhydride bond at the expense of ATP. The chain is Cyclic 2,3-diphosphoglycerate synthetase from Methanosphaera stadtmanae (strain ATCC 43021 / DSM 3091 / JCM 11832 / MCB-3).